The sequence spans 156 residues: ATP synthase subunit b (156 aa).

The helical transmembrane segment at 11 to 31 (AIAFAIFVMFCMKFVWPPLIG) threads the bilayer.

Belongs to the ATPase B chain family. As to quaternary structure, F-type ATPases have 2 components, F(1) - the catalytic core - and F(0) - the membrane proton channel. F(1) has five subunits: alpha(3), beta(3), gamma(1), delta(1), epsilon(1). F(0) has three main subunits: a(1), b(2) and c(10-14). The alpha and beta chains form an alternating ring which encloses part of the gamma chain. F(1) is attached to F(0) by a central stalk formed by the gamma and epsilon chains, while a peripheral stalk is formed by the delta and b chains.

Its subcellular location is the cell inner membrane. F(1)F(0) ATP synthase produces ATP from ADP in the presence of a proton or sodium gradient. F-type ATPases consist of two structural domains, F(1) containing the extramembraneous catalytic core and F(0) containing the membrane proton channel, linked together by a central stalk and a peripheral stalk. During catalysis, ATP synthesis in the catalytic domain of F(1) is coupled via a rotary mechanism of the central stalk subunits to proton translocation. Functionally, component of the F(0) channel, it forms part of the peripheral stalk, linking F(1) to F(0). This chain is ATP synthase subunit b, found in Psychrobacter cryohalolentis (strain ATCC BAA-1226 / DSM 17306 / VKM B-2378 / K5).